A 940-amino-acid chain; its full sequence is Receptor-like protein 9b (940 aa).

The signal sequence occupies residues 1 to 28 (MLMMFSPAFVMVMDLMVLVMMIMMMVSS). Residues 29 to 895 (LDAHGHISCI…GDEETTIDME (867 aa)) lie on the Extracellular side of the membrane. Residues N53, N63, N66, N101, N115, and N151 are each glycosylated (N-linked (GlcNAc...) asparagine). LRR repeat units follow at residues 108-136 (FGELQTLNLSNFWCQGWFDHIHGYKSFER), 137-163 (LKNLEILDISENGVNNTVLPFINTASS), 165-185 (KTLILHGNNMEGTFPMKELIN), 186-211 (LRNLELLDLSKNQFVGPVPDLANFHN), 213-232 (QGLDMSDNKFSGSNKGLCQL), 233-255 (KNLRELDLSQNKFTGQFPQCFDS), 257-279 (TQLQVLDISSNNFNGTVPSLIRN), 281-304 (DSVEYLALSDNEFKGFFSLELIAN), 306-330 (SKLKVFKLSSRSNLLRLKKLSSLQP), 331-354 (KFQLSVIELQNCNLENVPSFIQHQ), 355-378 (KDLHVINLSNNKLTGVFPYWLLEK), 379-402 (YPNLRVLLLQNNSLTMLELPRLLN), 403-426 (HTLQILDLSANNFDQRLPENIGKV), 427-450 (LPNIRHLNLSNNGFQWILPSSFGE), 452-475 (KDIKFLDLSHNNFSGSLPMKFLIG), and 477-502 (SSLHTLKLSYNKFFGQIFPKQTNFGS). N-linked (GlcNAc...) asparagine glycans are attached at residues N270 and N304. 3 N-linked (GlcNAc...) asparagine glycosylation sites follow: N361, N389, and N402. 2 N-linked (GlcNAc...) asparagine glycosylation sites follow: N434 and N463. Residues 503-522 (LVVLIANNNLFTGIADGLRN) form an LRR 17; degenerate repeat. LRR repeat units lie at residues 523–546 (VQSLGVLDLSNNYLQGVIPSWFGG), 547–570 (FFFAYLFLSNNLLEGTLPSTLFSK), 571–593 (PTFKILDLSGNKFSGNLPSHFTG), 595–615 (DMSLLYLNDNEFSGTIPSTLI), 616–639 (KDVLVLDLRNNKLSGTIPHFVKNE), 641–662 (ILSLLLRGNTLTGHIPTDLCGL), 663–686 (RSIRILDLANNRLKGSIPTCLNNV), 752–776 (FNFMFGLDLSSNELSGDIPKELGDL), 777–799 (QRIRALNLSHNSLSGLIPQSFSN), 801–824 (TDIESIDLSFNLLRGPIPQDLSKL), and 826–849 (YMVVFNVSYNNLSGSIPSHGKFST). N685 carries an N-linked (GlcNAc...) asparagine glycan. Residues N783 and N799 are each glycosylated (N-linked (GlcNAc...) asparagine). Residues N831, N836, N867, and N873 are each glycosylated (N-linked (GlcNAc...) asparagine). The helical transmembrane segment at 896-916 (IFYWSLAATYGVTWITFIVFL) threads the bilayer. Over 917 to 940 (CFDSPWRRVWFHFVDAFISLFKCV) the chain is Cytoplasmic.

The protein belongs to the RLP family.

Its subcellular location is the cell membrane. The protein is Receptor-like protein 9b of Arabidopsis thaliana (Mouse-ear cress).